Reading from the N-terminus, the 293-residue chain is D-alanine--D-alanine ligase (293 aa).

The ATP-grasp domain occupies 98–291; sequence KIIWKQHNLT…FNKLVVAIIN (194 aa). 124 to 177 contacts ATP; sequence DFPLPWMVKPTLEGSSIGISKVDSQIQLNNALMLAWQYNSHALIEQWIEGDEYT. Residues aspartate 245, glutamate 258, and asparagine 260 each contribute to the Mg(2+) site.

The protein belongs to the D-alanine--D-alanine ligase family. The cofactor is Mg(2+). Requires Mn(2+) as cofactor.

The protein localises to the cytoplasm. The enzyme catalyses 2 D-alanine + ATP = D-alanyl-D-alanine + ADP + phosphate + H(+). It participates in cell wall biogenesis; peptidoglycan biosynthesis. Cell wall formation. The sequence is that of D-alanine--D-alanine ligase from Ruthia magnifica subsp. Calyptogena magnifica.